The following is a 104-amino-acid chain: Large ribosomal subunit protein bL21 (104 aa).

The protein belongs to the bacterial ribosomal protein bL21 family. As to quaternary structure, part of the 50S ribosomal subunit. Contacts protein L20.

In terms of biological role, this protein binds to 23S rRNA in the presence of protein L20. In Clostridium botulinum (strain 657 / Type Ba4), this protein is Large ribosomal subunit protein bL21.